The chain runs to 348 residues: MSRFWSPFVKDLVPYVPGEQPKLARLVKLNTNENPYGPSPKALEAMRGELNDNLRLYPDPNGDRLKQAVAEYYGVTPAQVFVGNGSDEVLAHIFHGLFQHDAPLLFPDISYSFYPVYCGLYGIAFEQVALDEQFQIRIEDYKKPNAGIIFPNPNAPTGCLMPLQAVEELLQANRDSVVVVDEAYIDFGGETAISLVDRYDNLLVTQTLSKSRSLAGLRVGLAVGHPDLIEALERIKNSFNSYPLDRAAIVGAAVAFEDREYFEETCRKVIDSREVLVGQLQAKGFEVLPSAANFIFARHPQQDAGELAARLREQGVIVRHFKQPRIAQFLRITIGTPEMNQALLDALS.

Position 210 is an N6-(pyridoxal phosphate)lysine (Lys210).

The protein belongs to the class-II pyridoxal-phosphate-dependent aminotransferase family. Histidinol-phosphate aminotransferase subfamily. As to quaternary structure, homodimer. It depends on pyridoxal 5'-phosphate as a cofactor.

It carries out the reaction L-histidinol phosphate + 2-oxoglutarate = 3-(imidazol-4-yl)-2-oxopropyl phosphate + L-glutamate. The protein operates within amino-acid biosynthesis; L-histidine biosynthesis; L-histidine from 5-phospho-alpha-D-ribose 1-diphosphate: step 7/9. This chain is Histidinol-phosphate aminotransferase, found in Pseudomonas putida (strain ATCC 47054 / DSM 6125 / CFBP 8728 / NCIMB 11950 / KT2440).